The sequence spans 956 residues: UvrABC system protein A (956 aa).

33 to 40 lines the ATP pocket; sequence GLSGSGKS. A C4-type zinc finger spans residues 252 to 279; that stretch reads CPYCGFSVGELEPRMFSFNSPFGACPTC. 2 consecutive ABC transporter domains span residues 309-587 and 607-936; these read WRPI…KNSI and GNGL…KYLK. Position 639–646 (639–646) interacts with ATP; the sequence is GVSGSGKS. The segment at 738-764 adopts a C4-type zinc-finger fold; sequence CEACKGDGIIKIEMHFLPDVYVPCEVC.

Belongs to the ABC transporter superfamily. UvrA family. In terms of assembly, forms a heterotetramer with UvrB during the search for lesions.

Its subcellular location is the cytoplasm. In terms of biological role, the UvrABC repair system catalyzes the recognition and processing of DNA lesions. UvrA is an ATPase and a DNA-binding protein. A damage recognition complex composed of 2 UvrA and 2 UvrB subunits scans DNA for abnormalities. When the presence of a lesion has been verified by UvrB, the UvrA molecules dissociate. In Listeria monocytogenes serovar 1/2a (strain ATCC BAA-679 / EGD-e), this protein is UvrABC system protein A.